Here is a 45-residue protein sequence, read N- to C-terminus: Somatoliberin (45 aa).

Belongs to the glucagon family.

Its subcellular location is the secreted. GRF is released by the hypothalamus and acts on the adenohypophyse to stimulate the secretion of growth hormone. The protein is Somatoliberin (ghrh) of Cyprinus carpio (Common carp).